The following is a 133-amino-acid chain: Fatty acid-binding protein, heart (133 aa).

At alanine 2 the chain carries N-acetylalanine. Residue threonine 8 is modified to Phosphothreonine. Phosphotyrosine; by Tyr-kinases is present on tyrosine 20. Position 23 is a phosphoserine (serine 23). Threonine 30 carries the post-translational modification Phosphothreonine. Serine 83 carries the post-translational modification Phosphoserine. Position 127-129 (127-129) interacts with (9Z)-octadecenoate; it reads RTY. Residue 127 to 129 coordinates hexadecanoate; that stretch reads RTY. Residue 127 to 129 participates in octadecanoate binding; that stretch reads RTY.

In terms of tissue distribution, heart, but also skeletal muscle, kidney, brain and mammary gland.

It localises to the cytoplasm. FABPs are thought to play a role in the intracellular transport of long-chain fatty acids and their acyl-CoA esters. The protein is Fatty acid-binding protein, heart (Fabp3) of Rattus norvegicus (Rat).